Here is a 592-residue protein sequence, read N- to C-terminus: Signal peptide peptidase-like 2B (592 aa).

Positions 1–25 (MAAAVAAALARLLAAFLLLAAQVAC) are cleaved as a signal peptide. Residues 26–174 (EYGMVHVVSQ…APKEPVLDYN (149 aa)) lie on the Lumenal side of the membrane. Residues 71–149 (TASLLCSAAD…VALLSYKDML (79 aa)) enclose the PA domain. Residues Asn97 and Asn129 are each glycosylated (N-linked (GlcNAc...) asparagine). Residues 175-195 (MVIIFIMAVGTVAIGGYWAGS) form a helical membrane-spanning segment. Residues 196–221 (RDVKKRYMKHKRDDGPEKQEDEAVDV) are Cytoplasmic-facing. Residues 222–244 (TPVMTCVFVVMCCSMLVLLYYFY) form a helical membrane-spanning segment. Residues 245–248 (DLLV) are Lumenal-facing. A helical transmembrane segment spans residues 249–271 (YVVIGIFCLASATGLYSCLAPCV). Topologically, residues 272–293 (RRLPFGKCRIPNNSLPYFHKRP) are cytoplasmic. The chain crosses the membrane as a helical span at residues 294 to 314 (QARMLLLALFCVAVSVVWGVF). Residues 315-319 (RNEDQ) are Lumenal-facing. A helical transmembrane segment spans residues 320 to 340 (WAWVLQDALGIAFCLYMLKTI). At 341–348 (RLPTFKAC) the chain is on the cytoplasmic side. A helical membrane pass occupies residues 349 to 369 (TLLLLVLFLYDIFFVFITPFL). Residue Asp359 is part of the active site. Residues 370-412 (TKSGSSIMVEVATGPSDSATREKLPMVLKVPRLNSSPLALCDR) lie on the Lumenal side of the membrane. Residues 413–433 (PFSLLGFGDILVPGLLVAYCH) traverse the membrane as a helical segment. Asp421 is an active-site residue. Residues 434–445 (RFDIQVQSSRVY) are Cytoplasmic-facing. Residues 446 to 466 (FVACTIAYGVGLLVTFVALAL) traverse the membrane as a helical segment. Over 467-470 (MQRG) the chain is Lumenal. The helical transmembrane segment at 471 to 491 (QPALLYLVPCTLVTSCAVALW) threads the bilayer. Positions 472–474 (PAL) match the PAL motif. Residues 492 to 592 (RRELGVFWTG…SPVTQPGASA (101 aa)) lie on the Cytoplasmic side of the membrane. A compositionally biased stretch (pro residues) spans 512-524 (PWAPAPADGPQPP). The disordered stretch occupies residues 512–592 (PWAPAPADGP…SPVTQPGASA (81 aa)). Positions 580–592 (AQPSPVTQPGASA) are enriched in polar residues.

The protein belongs to the peptidase A22B family. In terms of assembly, monomer. Homodimer. Interacts with ITM2B. Interacts with TNF. Interacts with the simian foamy virus envelope glycoprotein gp130 and its processed leader peptide gp18LP; preferentially interacts with the leader peptide gp18LP. In terms of processing, glycosylated. Expressed predominantly in adrenal cortex and mammary gland.

The protein resides in the cell membrane. It localises to the golgi apparatus membrane. It is found in the lysosome membrane. Its subcellular location is the endosome membrane. The protein localises to the membrane. Intramembrane-cleaving aspartic protease (I-CLiP) that cleaves type II membrane signal peptides in the hydrophobic plane of the membrane. Functions in ITM2B and TNF processing. Catalyzes the intramembrane cleavage of the anchored fragment of shed TNF-alpha (TNF), which promotes the release of the intracellular domain (ICD) for signaling to the nucleus. May play a role in the regulation of innate and adaptive immunity. Catalyzes the intramembrane cleavage of the simian foamy virus processed leader peptide gp18 of the envelope glycoprotein gp130 dependently of prior ectodomain shedding by furin or furin-like proprotein convertase (PC)-mediated cleavage proteolysis. The protein is Signal peptide peptidase-like 2B of Homo sapiens (Human).